A 161-amino-acid chain; its full sequence is ATP synthase subunit b (161 aa).

The chain crosses the membrane as a helical span at residues 12-32 (IAFFLFVFFCMKYIWPNLISL).

Belongs to the ATPase B chain family. As to quaternary structure, F-type ATPases have 2 components, F(1) - the catalytic core - and F(0) - the membrane proton channel. F(1) has five subunits: alpha(3), beta(3), gamma(1), delta(1), epsilon(1). F(0) has three main subunits: a(1), b(2) and c(10-14). The alpha and beta chains form an alternating ring which encloses part of the gamma chain. F(1) is attached to F(0) by a central stalk formed by the gamma and epsilon chains, while a peripheral stalk is formed by the delta and b chains.

It is found in the cell membrane. In terms of biological role, f(1)F(0) ATP synthase produces ATP from ADP in the presence of a proton or sodium gradient. F-type ATPases consist of two structural domains, F(1) containing the extramembraneous catalytic core and F(0) containing the membrane proton channel, linked together by a central stalk and a peripheral stalk. During catalysis, ATP synthesis in the catalytic domain of F(1) is coupled via a rotary mechanism of the central stalk subunits to proton translocation. Functionally, component of the F(0) channel, it forms part of the peripheral stalk, linking F(1) to F(0). This is ATP synthase subunit b from Wigglesworthia glossinidia brevipalpis.